Here is a 107-residue protein sequence, read N- to C-terminus: Nucleoid-associated protein A1C_06705 (107 aa).

It belongs to the YbaB/EbfC family. In terms of assembly, homodimer.

Its subcellular location is the cytoplasm. The protein resides in the nucleoid. Functionally, binds to DNA and alters its conformation. May be involved in regulation of gene expression, nucleoid organization and DNA protection. This is Nucleoid-associated protein A1C_06705 from Rickettsia akari (strain Hartford).